The chain runs to 201 residues: Guanylate kinase (201 aa).

The 180-residue stretch at 7 to 186 (GVLLVLSSPS…SVEEISSILN (180 aa)) folds into the Guanylate kinase-like domain. 14–21 (SPSGAGKT) contributes to the ATP binding site.

It belongs to the guanylate kinase family.

It localises to the cytoplasm. The catalysed reaction is GMP + ATP = GDP + ADP. Functionally, essential for recycling GMP and indirectly, cGMP. This chain is Guanylate kinase, found in Wolbachia pipientis wMel.